Reading from the N-terminus, the 194-residue chain is Ribosome maturation factor RimM (194 aa).

The 82-residue stretch at 113-194 folds into the PRC barrel domain; the sequence is DGEYYWIDLI…RIVADWGLDY (82 aa).

This sequence belongs to the RimM family. Binds ribosomal protein uS19.

Its subcellular location is the cytoplasm. Functionally, an accessory protein needed during the final step in the assembly of 30S ribosomal subunit, possibly for assembly of the head region. Essential for efficient processing of 16S rRNA. May be needed both before and after RbfA during the maturation of 16S rRNA. It has affinity for free ribosomal 30S subunits but not for 70S ribosomes. The protein is Ribosome maturation factor RimM of Leptothrix cholodnii (strain ATCC 51168 / LMG 8142 / SP-6) (Leptothrix discophora (strain SP-6)).